Here is a 1131-residue protein sequence, read N- to C-terminus: DNA polymerase II large subunit (1131 aa).

The protein belongs to the archaeal DNA polymerase II family. In terms of assembly, heterodimer of a large subunit and a small subunit.

The catalysed reaction is DNA(n) + a 2'-deoxyribonucleoside 5'-triphosphate = DNA(n+1) + diphosphate. It catalyses the reaction Exonucleolytic cleavage in the 3'- to 5'-direction to yield nucleoside 5'-phosphates.. Functionally, possesses two activities: a DNA synthesis (polymerase) and an exonucleolytic activity that degrades single-stranded DNA in the 3'- to 5'-direction. Has a template-primer preference which is characteristic of a replicative DNA polymerase. The protein is DNA polymerase II large subunit of Methanococcus maripaludis (strain DSM 14266 / JCM 13030 / NBRC 101832 / S2 / LL).